The following is a 396-amino-acid chain: Chaperone protein DnaJ (396 aa).

Residues 6-71 form the J domain; that stretch reads DYYEVLEVTK…DKRSRYDQFG (66 aa). The segment at 154-236 adopts a CR-type zinc-finger fold; that stretch reads GVEKKFKLKK…CGGDGIVYGE (83 aa). 8 residues coordinate Zn(2+): Cys-167, Cys-170, Cys-184, Cys-187, Cys-210, Cys-213, Cys-224, and Cys-227. CXXCXGXG motif repeat units lie at residues 167-174, 184-191, 210-217, and 224-231; these read CNHCHGTG, CPTCKGSG, CPTCNGEG, and CKECGGDG.

This sequence belongs to the DnaJ family. As to quaternary structure, homodimer. Requires Zn(2+) as cofactor.

It is found in the cytoplasm. In terms of biological role, participates actively in the response to hyperosmotic and heat shock by preventing the aggregation of stress-denatured proteins and by disaggregating proteins, also in an autonomous, DnaK-independent fashion. Unfolded proteins bind initially to DnaJ; upon interaction with the DnaJ-bound protein, DnaK hydrolyzes its bound ATP, resulting in the formation of a stable complex. GrpE releases ADP from DnaK; ATP binding to DnaK triggers the release of the substrate protein, thus completing the reaction cycle. Several rounds of ATP-dependent interactions between DnaJ, DnaK and GrpE are required for fully efficient folding. Also involved, together with DnaK and GrpE, in the DNA replication of plasmids through activation of initiation proteins. This chain is Chaperone protein DnaJ, found in Bacteroides thetaiotaomicron (strain ATCC 29148 / DSM 2079 / JCM 5827 / CCUG 10774 / NCTC 10582 / VPI-5482 / E50).